The sequence spans 645 residues: Nucleolar GTP-binding protein 1 (645 aa).

In terms of domain architecture, OBG-type G spans 168–340; that stretch reads RTLLICGYPN…VRNKACEKLL (173 aa). GTP contacts are provided by residues 174–181, 220–224, and 288–291; these read GYPNVGKS, DTPGI, and NKTD. Residues 567–645 are disordered; sequence GQNDSMASGS…KRGIGKSDFR (79 aa). The span at 612-624 shows a compositional bias: basic and acidic residues; it reads NRDARQGEADRHA.

The protein belongs to the TRAFAC class OBG-HflX-like GTPase superfamily. OBG GTPase family. NOG subfamily.

Its subcellular location is the nucleus. The protein localises to the nucleolus. Functionally, involved in the biogenesis of the 60S ribosomal subunit. This chain is Nucleolar GTP-binding protein 1 (NOG1), found in Candida glabrata (strain ATCC 2001 / BCRC 20586 / JCM 3761 / NBRC 0622 / NRRL Y-65 / CBS 138) (Yeast).